Reading from the N-terminus, the 420-residue chain is Glutamate dehydrogenase (420 aa).

Residue Lys-105 is part of the active site. 220–226 (GYGNAGY) lines the NAD(+) pocket.

Belongs to the Glu/Leu/Phe/Val dehydrogenases family. In terms of assembly, homohexamer.

It is found in the cytoplasm. It catalyses the reaction L-glutamate + NAD(+) + H2O = 2-oxoglutarate + NH4(+) + NADH + H(+). The catalysed reaction is L-glutamate + NADP(+) + H2O = 2-oxoglutarate + NH4(+) + NADPH + H(+). The polypeptide is Glutamate dehydrogenase (gdhA) (Pyrococcus horikoshii (strain ATCC 700860 / DSM 12428 / JCM 9974 / NBRC 100139 / OT-3)).